Here is a 284-residue protein sequence, read N- to C-terminus: D-tagatose-1,6-bisphosphate aldolase subunit GatY (284 aa).

D82 serves as the catalytic Proton donor. Zn(2+) contacts are provided by H83 and H180. G181 contributes to the dihydroxyacetone phosphate binding site. H208 lines the Zn(2+) pocket. Dihydroxyacetone phosphate is bound by residues 209–211 and 230–233; these read GAS and NVAT.

The protein belongs to the class II fructose-bisphosphate aldolase family. TagBP aldolase GatY subfamily. Forms a complex with GatZ. Zn(2+) is required as a cofactor.

The catalysed reaction is D-tagatofuranose 1,6-bisphosphate = D-glyceraldehyde 3-phosphate + dihydroxyacetone phosphate. Its pathway is carbohydrate metabolism; D-tagatose 6-phosphate degradation; D-glyceraldehyde 3-phosphate and glycerone phosphate from D-tagatose 6-phosphate: step 2/2. Functionally, catalytic subunit of the tagatose-1,6-bisphosphate aldolase GatYZ, which catalyzes the reversible aldol condensation of dihydroxyacetone phosphate (DHAP or glycerone-phosphate) with glyceraldehyde 3-phosphate (G3P) to produce tagatose 1,6-bisphosphate (TBP). Requires GatZ subunit for full activity and stability. Is involved in the catabolism of galactitol. In Escherichia coli O139:H28 (strain E24377A / ETEC), this protein is D-tagatose-1,6-bisphosphate aldolase subunit GatY.